A 325-amino-acid chain; its full sequence is tRNA N6-adenosine threonylcarbamoyltransferase (325 aa).

Fe cation contacts are provided by His107, His111, and Tyr127. Substrate-binding positions include 127–131 (YVSGG), Asp159, Gly172, Glu176, and Asn257. Position 285 (Asp285) interacts with Fe cation.

It belongs to the KAE1 / TsaD family. Monomer. Component of the KEOPS complex that consists of Kae1, Bud32, Cgi121 and Pcc1; the whole complex dimerizes. It depends on Fe(2+) as a cofactor.

It localises to the cytoplasm. The catalysed reaction is L-threonylcarbamoyladenylate + adenosine(37) in tRNA = N(6)-L-threonylcarbamoyladenosine(37) in tRNA + AMP + H(+). Its function is as follows. Required for the formation of a threonylcarbamoyl group on adenosine at position 37 (t(6)A37) in tRNAs that read codons beginning with adenine. Is a component of the KEOPS complex that is probably involved in the transfer of the threonylcarbamoyl moiety of threonylcarbamoyl-AMP (TC-AMP) to the N6 group of A37. Kae1 likely plays a direct catalytic role in this reaction, but requires other protein(s) of the complex to fulfill this activity. This Thermococcus kodakarensis (strain ATCC BAA-918 / JCM 12380 / KOD1) (Pyrococcus kodakaraensis (strain KOD1)) protein is tRNA N6-adenosine threonylcarbamoyltransferase.